A 719-amino-acid polypeptide reads, in one-letter code: Ferric reductase transmembrane component 4 (719 aa).

The signal sequence occupies residues 1–18 (MLLVHIISFLLFFQLSAA). Topologically, residues 19-156 (KAPPSKTSLI…YGYYYNHDIP (138 aa)) are extracellular. N-linked (GlcNAc...) asparagine glycans are attached at residues N51, N80, N101, N113, N127, and N135. The chain crosses the membrane as a helical span at residues 157-177 (YYFGGIICAYFVGVMLLAGLI). At 178–228 (RFLNYTPIKKIMFQQKLVNYVRGYTTLPTLYEKHAEPFSYLKVITGYLPTR) the chain is on the cytoplasmic side. A helical transmembrane segment spans residues 229-249 (FETLVILGYLILHTIFMAYKY). Residues 250–267 (QYDPYHIIFAAHRAEVAH) are Extracellular-facing. The chain crosses the membrane as a helical span at residues 268–288 (FVAYRSGILSFAHLPLIVLFA). Residues 273 to 407 (SGILSFAHLP…SGIEWIYAAI (135 aa)) form the Ferric oxidoreductase domain. Topologically, residues 289-304 (GRNNFLQLISGLKHTS) are cytoplasmic. Residues 305-325 (FIVFHKWLGRMMFLDAIIHAA) traverse the membrane as a helical segment. Positions 309 and 323 each coordinate heme. Topologically, residues 326–346 (GFTNYYLYYKKWNTVRLRVYW) are extracellular. Residues 347–367 (KFGIATTCLAGMLIFFSIAAF) traverse the membrane as a helical segment. The Cytoplasmic segment spans residues 368-373 (RRHYYE). Residues 374–394 (TFMALHIVFAALFLYTCWEHV) form a helical membrane-spanning segment. The heme site is built by H379 and H393. Position 395 (T395) is a topological domain, extracellular. The helical transmembrane segment at 396-416 (NFSGIEWIYAAIAIWGVDRIV) threads the bilayer. The FAD-binding FR-type domain occupies 408–527 (AIWGVDRIVR…EGPYGSKSTA (120 aa)). Residues 417–719 (RITRIALLGF…IEYLEEYQAW (303 aa)) are Cytoplasmic-facing. 472–478 (HPFTVMD) is an FAD binding site. Residue 519–522 (GPYG) coordinates NADP(+). Polar residues-rich tracts occupy residues 606 to 618 (EKIS…NGET) and 625 to 643 (SSLS…TELP). The segment at 606–643 (EKISSNEVKNGETTAEKAPSSLSNSEKAPSESENTELP) is disordered. 685–686 (CG) is an NADP(+) binding site.

The protein belongs to the ferric reductase (FRE) family. Requires FAD as cofactor.

Its subcellular location is the cell membrane. It catalyses the reaction 2 a Fe(II)-siderophore + NADP(+) + H(+) = 2 a Fe(III)-siderophore + NADPH. Functionally, siderophore-iron reductase responsible for reducing extracellular iron prior to import. Catalyzes the reductive uptake of Fe(3+) bound to dihydroxamate rhodotorulic acid. Fe(3+) is reduced to Fe(2+), which then dissociates from the siderophore and can be imported by the high-affinity Fe(2+) transport complex in the plasma membrane. The chain is Ferric reductase transmembrane component 4 (FRE4) from Saccharomyces cerevisiae (strain ATCC 204508 / S288c) (Baker's yeast).